We begin with the raw amino-acid sequence, 177 residues long: T-cell receptor beta chain C region (177 aa).

Positions Glu-1–Glu-150 are c region. Asn-5 and Asn-22 each carry an N-linked (GlcNAc...) asparagine glycan. Cys-31 and Cys-96 are joined by a disulfide. The chain crosses the membrane as a helical span at residues Thr-146 to Leu-168. The Cytoplasmic portion of the chain corresponds to Met-169 to Ser-177.

The protein resides in the membrane. This chain is T-cell receptor beta chain C region, found in Oryctolagus cuniculus (Rabbit).